The sequence spans 595 residues: Aspartate--tRNA(Asp/Asn) ligase (595 aa).

Glu-177 is a binding site for L-aspartate. The tract at residues 201 to 204 (QQFK) is aspartate. Arg-223 lines the L-aspartate pocket. ATP is bound by residues 223–225 (RDE) and Gln-232. Residue His-455 participates in L-aspartate binding. An ATP-binding site is contributed by Glu-489. Arg-496 is an L-aspartate binding site. An ATP-binding site is contributed by 542–545 (GLDR).

This sequence belongs to the class-II aminoacyl-tRNA synthetase family. Type 1 subfamily. As to quaternary structure, homodimer.

The protein localises to the cytoplasm. The enzyme catalyses tRNA(Asx) + L-aspartate + ATP = L-aspartyl-tRNA(Asx) + AMP + diphosphate. Aspartyl-tRNA synthetase with relaxed tRNA specificity since it is able to aspartylate not only its cognate tRNA(Asp) but also tRNA(Asn). Reaction proceeds in two steps: L-aspartate is first activated by ATP to form Asp-AMP and then transferred to the acceptor end of tRNA(Asp/Asn). In Opitutus terrae (strain DSM 11246 / JCM 15787 / PB90-1), this protein is Aspartate--tRNA(Asp/Asn) ligase.